Here is a 360-residue protein sequence, read N- to C-terminus: Glutaminyl-peptide cyclotransferase (360 aa).

The signal sequence occupies residues 1-23 (MKYLKILIIVTIFFFLLINVINC). N-linked (GlcNAc...) asparagine glycosylation is present at Asn135. Asp165 contributes to the Zn(2+) binding site. Residue Glu199 is the Proton acceptor of the active site. Residue Glu200 participates in Zn(2+) binding. Asp251 serves as the catalytic Proton acceptor. His330 contributes to the Zn(2+) binding site.

The protein belongs to the glutaminyl-peptide cyclotransferase family.

The protein localises to the secreted. It catalyses the reaction N-terminal L-glutaminyl-[peptide] = N-terminal 5-oxo-L-prolyl-[peptide] + NH4(+). Responsible for the biosynthesis of pyroglutamyl peptides. Has a bias against acidic and tryptophan residues adjacent to the N-terminal glutaminyl residue and a lack of importance of chain length after the second residue. Also catalyzes N-terminal pyroglutamate formation. In Dictyostelium discoideum (Social amoeba), this protein is Glutaminyl-peptide cyclotransferase (qpct).